We begin with the raw amino-acid sequence, 141 residues long: Large ribosomal subunit protein uL16m (141 aa).

It belongs to the universal ribosomal protein uL16 family.

It localises to the mitochondrion. In Acanthamoeba castellanii (Amoeba), this protein is Large ribosomal subunit protein uL16m (RPL16).